The following is a 108-amino-acid chain: MGSSRVIRHQASNYAQSAYQCHIKEPLLSLFGNEKQHSSGTTAAAAITFPQKLIIDQLTRKRKTKKKKIRKLGLHTSVFFFLRIVCMSSAASVFTGIRCVFMFRTNAK.

Residues 72-94 (LGLHTSVFFFLRIVCMSSAASVF) traverse the membrane as a helical segment.

Its subcellular location is the membrane. This is an uncharacterized protein from Saccharomyces cerevisiae (strain ATCC 204508 / S288c) (Baker's yeast).